The sequence spans 149 residues: Ribosome maturation factor RimP (149 aa).

It belongs to the RimP family.

It is found in the cytoplasm. Functionally, required for maturation of 30S ribosomal subunits. The chain is Ribosome maturation factor RimP from Neisseria gonorrhoeae (strain NCCP11945).